The primary structure comprises 482 residues: CBL-interacting serine/threonine-protein kinase 23 (482 aa).

Positions 1–25 are enriched in low complexity; the sequence is MASRTTPSRSTPSRSTPSGSSSGGR. A disordered region spans residues 1 to 29; it reads MASRTTPSRSTPSRSTPSGSSSGGRTRVG. Residues 31-286 enclose the Protein kinase domain; the sequence is YELGRTLGEG…FAEVIENEWF (256 aa). ATP is bound by residues 37–45 and lysine 60; that span reads LGEGTFAKV. Aspartate 154 acts as the Proton acceptor in catalysis. The tract at residues 172–201 is activation loop; sequence DFGLSALPQQVREDGLLHTTCGTPNYVAPE. Serine 176 is modified (phosphoserine). Threonine 190 carries the phosphothreonine modification. The NAF domain occupies 328-352; that stretch reads KTPVTMNAFELISTSQGLNLGSLFE. The interval 359–388 is PPI; sequence KRKTRFTSKSSANEIVTKIEAAAAPMGFDV. The interval 459-482 is disordered; that stretch reads KEEGTDGGGTNGAMANRTIAKQST.

The protein belongs to the protein kinase superfamily. CAMK Ser/Thr protein kinase family. SNF1 subfamily. As to quaternary structure, part of a K(+)-channel calcium-sensing kinase/phosphatase complex composed by a calcium sensor CBL (CBL1, CBL2, CBL3 or CBL9), a kinase CIPK (CIPK6, CIPK16 or CIPK23), a phosphatase PP2C (AIP1) and a K(+)-channel (AKT1). Interacts with AKT1, CBL1, CBL2, CBL3, CBL5, CBL8, CBL9 and NRT1.1. Mn(2+) serves as cofactor. Autophosphorylated. As to expression, in seedlings, mostly in vascular bundles, and in roots, especially in cortex and endodermis cells. In adult plants, mostly expressed in flowers, and, to a lower extent, in roots, leaves, stems and siliques, particularly in vascular tissues. Also detected in guard cells and root hairs.

The protein resides in the cell membrane. The enzyme catalyses L-seryl-[protein] + ATP = O-phospho-L-seryl-[protein] + ADP + H(+). It catalyses the reaction L-threonyl-[protein] + ATP = O-phospho-L-threonyl-[protein] + ADP + H(+). In terms of biological role, CIPK serine-threonine protein kinases interact with CBL proteins. Binding of a CBL protein to the regulatory NAF domain of CIPK protein leads to activation of the kinase in a calcium-dependent manner. Downstream of CBL1, CBL2, CBL3 and CBL9, regulates by phosphorylation the K(+) conductance and uptake of AKT1 in low K(+) condition, in response to calcium signaling and during the stomatal opening regulation by monitoring the turgor pressure in guard cells. In response to low nitrate concentration, phosphorylates NRT1.1, switching it from a low-affinity nitrate transporter to a high-affinity transporter. Confers tolerance to low potassium conditions. Involved in drought sensitivity and leaf transpiration. The chain is CBL-interacting serine/threonine-protein kinase 23 (CIPK23) from Arabidopsis thaliana (Mouse-ear cress).